Consider the following 278-residue polypeptide: Probable F-box protein At1g14315 (278 aa).

The region spanning 1–43 (MQLLPHDTVEDILERVPVKSLLRFKSACKQWKLTIESQYFQAK) is the F-box domain.

This Arabidopsis thaliana (Mouse-ear cress) protein is Probable F-box protein At1g14315.